The chain runs to 155 residues: Protein-export protein SecB (155 aa).

Belongs to the SecB family. As to quaternary structure, homotetramer, a dimer of dimers. One homotetramer interacts with 1 SecA dimer.

It localises to the cytoplasm. In terms of biological role, one of the proteins required for the normal export of preproteins out of the cell cytoplasm. It is a molecular chaperone that binds to a subset of precursor proteins, maintaining them in a translocation-competent state. It also specifically binds to its receptor SecA. This is Protein-export protein SecB from Paramagnetospirillum magneticum (strain ATCC 700264 / AMB-1) (Magnetospirillum magneticum).